The primary structure comprises 202 residues: uncharacterized protein (202 aa).

Residues Thr10–Val30 form a helical membrane-spanning segment.

This sequence belongs to the bacterial sugar transferase family.

It is found in the cell membrane. May be involved in the production of the exopolysaccharide (EPS) component of the extracellular matrix during biofilm formation. EPS is responsible for the adhesion of chains of cells into bundles. This is an uncharacterized protein from Bacillus subtilis (strain 168).